The chain runs to 423 residues: Sphingomyelin phosphodiesterase 2 (423 aa).

E49 contributes to the Mg(2+) binding site. The active-site Proton acceptor is H272. Helical transmembrane passes span 330 to 350 (VIGL…GGGA) and 354 to 374 (AILL…FYLF). A disordered region spans residues 400–423 (QDLGPEPQPALLLGQQEGDRTKEQ).

The protein belongs to the neutral sphingomyelinase family. Mg(2+) is required as a cofactor.

Its subcellular location is the cell membrane. The enzyme catalyses a sphingomyelin + H2O = phosphocholine + an N-acylsphing-4-enine + H(+). It catalyses the reaction an N-(acyl)-sphingosylphosphocholine + H2O = an N-acyl-sphingoid base + phosphocholine + H(+). It carries out the reaction 1-O-octadecyl-sn-glycero-3-phosphocholine + H2O = 1-O-octadecyl-sn-glycerol + phosphocholine + H(+). The catalysed reaction is 1-O-hexadecyl-sn-glycero-3-phosphocholine + H2O = 1-O-hexadecyl-sn-glycerol + phosphocholine + H(+). The enzyme catalyses 1-hexadecanoyl-sn-glycero-3-phosphocholine + H2O = 1-hexadecanoyl-sn-glycerol + phosphocholine + H(+). It catalyses the reaction a sphingosylphosphocholine + H2O = a sphingoid base + phosphocholine + H(+). The protein operates within lipid metabolism; sphingolipid metabolism. Its function is as follows. Catalyzes, at least in vitro, the hydrolysis of sphingomyelin to form ceramide and phosphocholine. Also hydrolyzes 1-O-alkyl-2-lyso-sn-glycero-3-phosphocholine (lyso-platelet-activating factor) in vivo. Also acts on 1-acyl-2-lyso-sn-glycero-3-phosphocholine (lyso-PC) and sphingosylphosphocholine. This chain is Sphingomyelin phosphodiesterase 2, found in Homo sapiens (Human).